A 659-amino-acid chain; its full sequence is Interferon-induced GTP-binding protein Mx3 (659 aa).

A Dynamin-type G domain is found at 65–338 (DLALPAIAVI…LISHICKSLP (274 aa)). The segment at 75-82 (GDQSSGKS) is G1 motif. 75–82 (GDQSSGKS) contacts GTP. Residues 100 to 102 (VTR) form a G2 motif region. Positions 176-179 (DLPG) are G3 motif. Residues 176–180 (DLPGI) and 245–248 (TKPD) each bind GTP. Residues 245 to 248 (TKPD) are G4 motif. A G5 motif region spans residues 277 to 280 (KCRG). Residues 547–568 (EAEEEERKHGKSRSAQSPNLQT) form a disordered region. Residues 559 to 568 (RSAQSPNLQT) show a composition bias toward polar residues. One can recognise a GED domain in the interval 571 to 659 (MDEIFQHLNA…AQRRLAKFPG (89 aa)).

It belongs to the TRAFAC class dynamin-like GTPase superfamily. Dynamin/Fzo/YdjA family.

It localises to the cytoplasm. Functionally, does not show activity against influenza virus or VSV; although it only differs from Mx2 by 8 positions. This is Interferon-induced GTP-binding protein Mx3 (Mx3) from Rattus norvegicus (Rat).